A 281-amino-acid chain; its full sequence is Ribosomal RNA small subunit methyltransferase A (281 aa).

Positions 18, 20, 45, 66, 91, and 118 each coordinate S-adenosyl-L-methionine.

This sequence belongs to the class I-like SAM-binding methyltransferase superfamily. rRNA adenine N(6)-methyltransferase family. RsmA subfamily.

The protein localises to the cytoplasm. It carries out the reaction adenosine(1518)/adenosine(1519) in 16S rRNA + 4 S-adenosyl-L-methionine = N(6)-dimethyladenosine(1518)/N(6)-dimethyladenosine(1519) in 16S rRNA + 4 S-adenosyl-L-homocysteine + 4 H(+). Its function is as follows. Specifically dimethylates two adjacent adenosines (A1518 and A1519) in the loop of a conserved hairpin near the 3'-end of 16S rRNA in the 30S particle. May play a critical role in biogenesis of 30S subunits. The sequence is that of Ribosomal RNA small subunit methyltransferase A from Histophilus somni (strain 129Pt) (Haemophilus somnus).